The sequence spans 335 residues: MRMKKTVAVIGAGNVGEHVASLILLKNLANVKMFDLPRKTEEKVFEPVKGKALDMKQMLAAMDIDARVEGYTVTPEGEGYEPLEGSDIVVITAGFPRRPGMSREDLLEANIRIISVIADRIKRYAPDAIVIVVTNPVDVMTYVAYKLLNFPKNRVMGMAGVLDSARFKTFISEELMVSPKDIHAYVIGGHGDEMVPLISISNVGGIPLKDLLPKEKLEKIIERTRFGGGEIVNLMGTSAYYAPAAAIVDMIEALVQNSKRILPCSVYLDGEAGEYYGVQGFCVGVPVKLGSNGVEEIIKVPMIEEEREMWRRSVESVKKTVEVAEGILSAGSSRQ.

NAD(+)-binding positions include 11 to 16 and aspartate 35; that span reads GAGNVG. Substrate-binding residues include arginine 97 and arginine 103. NAD(+)-binding positions include asparagine 110 and 133-135; that span reads VTN. Substrate contacts are provided by asparagine 135 and arginine 166. The active-site Proton acceptor is the histidine 190.

Belongs to the LDH/MDH superfamily. MDH type 3 family.

The catalysed reaction is (S)-malate + NAD(+) = oxaloacetate + NADH + H(+). Catalyzes the reversible oxidation of malate to oxaloacetate. The sequence is that of Malate dehydrogenase 1 (mdh1) from Aquifex aeolicus (strain VF5).